The following is a 416-amino-acid chain: Nuclear hormone receptor family member nhr-59 (416 aa).

The segment at residues 17–94 is a DNA-binding region (nuclear receptor); the sequence is QTFCQVCGQE…IGMDIQNFQF (78 aa). NR C4-type zinc fingers lie at residues 20–40 and 57–82; these read CQVC…CRAC and CKDG…LKKC. Positions 162–415 constitute an NR LBD domain; that stretch reads TRLQKLSSSL…FSHPELVKDV (254 aa).

It belongs to the nuclear hormone receptor family.

It is found in the nucleus. In terms of biological role, orphan nuclear receptor. The chain is Nuclear hormone receptor family member nhr-59 from Caenorhabditis elegans.